Here is a 518-residue protein sequence, read N- to C-terminus: MSDYLLQMNGIVKTFGGVKALNGIDLKVRPGECVGLCGENGAGKSTLMKILSAVYPHGTWDGEILWDGQPLKAQSISETEAAGIVIIHQELTLVPDLSVAENIFMGHELTLPGGRMNYPAMIHRAEALMRELKVPDMNVSLPVSQYGGGYQQLVEIAKALNKQARLLILDEPSSALTRSEIEVLLDIIRDLKAKGVACVYISHKLDEVAAVCDTISVIRDGQHIATTAMENMDIPQIITQMVGREMSSLYPTEPHDIGEVIFEARHITCYDVDNPKRKRVDDVSFSLRRGEILGIAGLVGAGRTELVTALFGAYPGRHEGEVWLDGHPIDTRTPLKSIRAGVCLVPEDRKRQGIIPDLGVGQNITLAVLDSFSKLTRIDAEAELGSIDREISRLHLKTASPFLPITSLSGGNQQKAVLAKMLLTRPRVLILDEPTRGVDVGAKYEIYKLMGMLAAEGVSIIMVSSELAEVLGVSDRVLVIGEGRLQGDFVNHELTQEQVLAAALSQPDSHNNKDRKSA.

ABC transporter domains follow at residues 6 to 245 (LQMN…VGRE) and 262 to 507 (FEAR…LSQP). 38-45 (GENGAGKS) provides a ligand contact to ATP.

This sequence belongs to the ABC transporter superfamily. Xylose importer (TC 3.A.1.2.4) family. The complex is composed of two ATP-binding proteins (XylG), two transmembrane proteins (XylH) and a solute-binding protein (XylF).

Its subcellular location is the cell inner membrane. It carries out the reaction D-xylose(out) + ATP + H2O = D-xylose(in) + ADP + phosphate + H(+). In terms of biological role, part of the ABC transporter complex XylFGH involved in xylose import. Responsible for energy coupling to the transport system. This chain is Xylose import ATP-binding protein XylG, found in Pseudomonas fluorescens (strain Pf0-1).